We begin with the raw amino-acid sequence, 197 residues long: Adenine phosphoribosyltransferase (197 aa).

It belongs to the purine/pyrimidine phosphoribosyltransferase family. Homodimer.

It localises to the cytoplasm. It carries out the reaction AMP + diphosphate = 5-phospho-alpha-D-ribose 1-diphosphate + adenine. Its pathway is purine metabolism; AMP biosynthesis via salvage pathway; AMP from adenine: step 1/1. Catalyzes a salvage reaction resulting in the formation of AMP, that is energically less costly than de novo synthesis. The sequence is that of Adenine phosphoribosyltransferase from Ralstonia nicotianae (strain ATCC BAA-1114 / GMI1000) (Ralstonia solanacearum).